We begin with the raw amino-acid sequence, 295 residues long: Methionine aminopeptidase (295 aa).

His63 lines the substrate pocket. Positions 83, 94, and 154 each coordinate a divalent metal cation. His162 provides a ligand contact to substrate. Glu188 and Glu281 together coordinate a divalent metal cation.

Belongs to the peptidase M24A family. Methionine aminopeptidase archaeal type 2 subfamily. As to quaternary structure, monomer. Requires Fe(2+) as cofactor. It depends on Co(2+) as a cofactor. The cofactor is Ni(2+). Mn(2+) serves as cofactor.

The enzyme catalyses Release of N-terminal amino acids, preferentially methionine, from peptides and arylamides.. In terms of biological role, removes the N-terminal methionine from nascent proteins. The N-terminal methionine is often cleaved when the second residue in the primary sequence is small and uncharged (Met-Ala-, Cys, Gly, Pro, Ser, Thr, or Val). The chain is Methionine aminopeptidase from Thermococcus onnurineus (strain NA1).